The primary structure comprises 156 residues: Small ribosomal subunit protein uS7 (156 aa).

The protein belongs to the universal ribosomal protein uS7 family. In terms of assembly, part of the 30S ribosomal subunit. Contacts proteins S9 and S11.

One of the primary rRNA binding proteins, it binds directly to 16S rRNA where it nucleates assembly of the head domain of the 30S subunit. Is located at the subunit interface close to the decoding center, probably blocks exit of the E-site tRNA. This is Small ribosomal subunit protein uS7 from Latilactobacillus sakei subsp. sakei (strain 23K) (Lactobacillus sakei subsp. sakei).